Here is a 139-residue protein sequence, read N- to C-terminus: Putative pre-16S rRNA nuclease (139 aa).

The protein belongs to the YqgF nuclease family.

Its subcellular location is the cytoplasm. Could be a nuclease involved in processing of the 5'-end of pre-16S rRNA. The protein is Putative pre-16S rRNA nuclease of Streptococcus equi subsp. zooepidemicus (strain H70).